Consider the following 150-residue polypeptide: D-aminoacyl-tRNA deacylase (150 aa).

Residues 138–139 (GP) carry the Gly-cisPro motif, important for rejection of L-amino acids motif.

Belongs to the DTD family. Homodimer.

The protein resides in the cytoplasm. The enzyme catalyses glycyl-tRNA(Ala) + H2O = tRNA(Ala) + glycine + H(+). It catalyses the reaction a D-aminoacyl-tRNA + H2O = a tRNA + a D-alpha-amino acid + H(+). An aminoacyl-tRNA editing enzyme that deacylates mischarged D-aminoacyl-tRNAs. Also deacylates mischarged glycyl-tRNA(Ala), protecting cells against glycine mischarging by AlaRS. Acts via tRNA-based rather than protein-based catalysis; rejects L-amino acids rather than detecting D-amino acids in the active site. By recycling D-aminoacyl-tRNA to D-amino acids and free tRNA molecules, this enzyme counteracts the toxicity associated with the formation of D-aminoacyl-tRNA entities in vivo and helps enforce protein L-homochirality. In Chlorobaculum tepidum (strain ATCC 49652 / DSM 12025 / NBRC 103806 / TLS) (Chlorobium tepidum), this protein is D-aminoacyl-tRNA deacylase.